Here is a 550-residue protein sequence, read N- to C-terminus: Glucagon-like peptide 2 receptor (550 aa).

Topologically, residues 1–173 (MRPQPSPAVP…SFRQNVDHYA (173 aa)) are extracellular. 3 disulfide bridges follow: Cys83–Cys105, Cys96–Cys137, and Cys118–Cys159. Asn97, Asn113, Asn148, and Asn162 each carry an N-linked (GlcNAc...) asparagine glycan. The helical transmembrane segment at 174-198 (LLYTLQLMYTVGYSVSLISLFLALT) threads the bilayer. The Cytoplasmic portion of the chain corresponds to 199–210 (LFLFLRKLHCTR). A helical transmembrane segment spans residues 211-235 (NYIHMNLFASFILKVLAVLVKDMVS). Over 236 to 261 (HNSYSKRPDDESGWMSYLSETSVSCR) the chain is Extracellular. A helical transmembrane segment spans residues 262–285 (SVQVLLHYFVGTNHLWLLVEGLYL). The Cytoplasmic portion of the chain corresponds to 286-299 (HTLLEPTVFPERRL). Residues 300–321 (WPKYLVVGWAFPMLFVIPWGFA) traverse the membrane as a helical segment. The Extracellular portion of the chain corresponds to 322 to 339 (RAHLENTRCWATNGNLKI). Residues 340 to 362 (WWIIRGPMLLCVTVNFFIFLKIL) form a helical membrane-spanning segment. The Cytoplasmic portion of the chain corresponds to 363–386 (KLLISKLKAHQMCFRDYKYRLAKS). A helical transmembrane segment spans residues 387–405 (TLLLIPLLGVHEVLFTFFP). Over 406-417 (DDQVQGFSKRIR) the chain is Extracellular. A helical transmembrane segment spans residues 418 to 438 (LFIQLTLSSVHGFLVALQYGF). Residues 439 to 550 (ANGEVKAELR…MEEILEESEI (112 aa)) lie on the Cytoplasmic side of the membrane.

This sequence belongs to the G-protein coupled receptor 2 family.

It is found in the cell membrane. Its function is as follows. This is a receptor for glucagon-like peptide 2. The activity of this receptor is mediated by G proteins which activate adenylyl cyclase. This is Glucagon-like peptide 2 receptor (Glp2r) from Rattus norvegicus (Rat).